Consider the following 180-residue polypeptide: Translation initiation factor IF-3 (180 aa).

Belongs to the IF-3 family. Monomer.

It localises to the cytoplasm. In terms of biological role, IF-3 binds to the 30S ribosomal subunit and shifts the equilibrium between 70S ribosomes and their 50S and 30S subunits in favor of the free subunits, thus enhancing the availability of 30S subunits on which protein synthesis initiation begins. In Hyphomonas neptunium (strain ATCC 15444), this protein is Translation initiation factor IF-3.